Here is a 552-residue protein sequence, read N- to C-terminus: Probable malate:quinone oxidoreductase (552 aa).

The tract at residues D530–L552 is disordered. A compositionally biased stretch (polar residues) spans Q542 to L552.

Belongs to the MQO family. FAD is required as a cofactor.

The catalysed reaction is (S)-malate + a quinone = a quinol + oxaloacetate. It participates in carbohydrate metabolism; tricarboxylic acid cycle; oxaloacetate from (S)-malate (quinone route): step 1/1. This chain is Probable malate:quinone oxidoreductase, found in Cronobacter sakazakii (strain ATCC BAA-894) (Enterobacter sakazakii).